The sequence spans 444 residues: Phosphoglucosamine mutase (444 aa).

Ser-104 functions as the Phosphoserine intermediate in the catalytic mechanism. Ser-104, Asp-243, Asp-245, and Asp-247 together coordinate Mg(2+). Phosphoserine is present on Ser-104.

This sequence belongs to the phosphohexose mutase family. It depends on Mg(2+) as a cofactor. In terms of processing, activated by phosphorylation.

The enzyme catalyses alpha-D-glucosamine 1-phosphate = D-glucosamine 6-phosphate. Functionally, catalyzes the conversion of glucosamine-6-phosphate to glucosamine-1-phosphate. The protein is Phosphoglucosamine mutase of Neisseria meningitidis serogroup C (strain 053442).